Consider the following 612-residue polypeptide: Protein hinderin (612 aa).

Residue Ser20 is modified to Phosphoserine. A coiled-coil region spans residues 90 to 166 (LKDLCLEDKR…CQELLSLYQK (77 aa)). A Phosphoserine modification is found at Ser178. Positions 362–406 (IEKQLSEDRRQQLMLQKMELEIEKERLQHLLAQQETKLLLKQQQL) form a coiled coil. The span at 462–477 (STSFKKCPDSPNSGQN) shows a compositional bias: polar residues. Disordered stretches follow at residues 462–484 (STSF…KKTV) and 509–598 (ETVT…RSPE). Phosphoserine is present on residues Ser471, Ser527, and Ser558. Polar residues-rich tracts occupy residues 555–568 (QSLS…SQPH) and 575–585 (TWSTLRPTPQK).

As to quaternary structure, interacts (via N- and C-terminal domains) with SMC3 (via central hinge region).

Functionally, competes with SMC1 for binding to SMC3. May affect the availability of SMC3 to engage in the formation of multimeric protein complexes. In Mus musculus (Mouse), this protein is Protein hinderin (Kiaa1328).